The sequence spans 93 residues: Consomatin G1 (93 aa).

An N-terminal signal peptide occupies residues 1–22 (MQTAYWVMLMMMVCITAPLPEG). Positions 23–69 (GKPNSGIRGLVPNDLTPQHTLRSLISRRQTDVLLDATLLTTPAPEQR) are excised as a propeptide. A disulfide bridge connects residues Cys72 and Cys77. Position 74 is a D-tryptophan (Trp74). Residues 79-93 (PRPYPWRRRDLNGKR) constitute a propeptide that is removed on maturation.

The protein belongs to the conotoxin C superfamily. Consomatin family. As to expression, expressed by the venom duct.

Its subcellular location is the secreted. Potently activates human somatostatin receptors (SSTR) with a specific activation of SSTR2 (EC(50)=2.6 nM). The protein is Consomatin G1 of Conus geographus (Geography cone).